A 224-amino-acid polypeptide reads, in one-letter code: Tumor protein D52 (224 aa).

The segment at 29-53 (LSPSGNTSPPGSPTQNVGLLKTEPV) is disordered. Position 35 is a phosphothreonine (threonine 35). A phosphoserine mark is found at serine 36 and serine 40. A coiled-coil region spans residues 61–113 (VTMLSAPEALTEEEQEELRRELTKVEEEIQTLSQVLAAKEKHLAELKRKLGIS). 3 positions are modified to phosphoserine: threonine 138, serine 175, and serine 223. Residues 186–224 (KVGGAKPAGGDFGEVLNSTANATSTMTTEPPPEQMTESP) form a disordered region. A compositionally biased stretch (low complexity) spans 202–224 (NSTANATSTMTTEPPPEQMTESP).

It belongs to the TPD52 family. In terms of assembly, forms a homodimer or heterodimer with other members of the family. As to expression, isoform 2 is expressed at higher levels in kidney and brain than in liver, lung, testis and heart. Within the brain, isoform 2 is highly expressed in the granular layer of the cerebellum, the cortex and the hippocampus. In embryos, isoform 2 is expressed in the epithelium of the developing intestine, stomach, olfactory epithelium, neuronal layers of the retina, salivary gland, kidney and dorsal root ganglion.

This chain is Tumor protein D52 (Tpd52), found in Mus musculus (Mouse).